We begin with the raw amino-acid sequence, 290 residues long: Probable endonuclease 4 (290 aa).

Positions 69, 109, 145, 179, 182, 216, 229, 231, and 261 each coordinate Zn(2+).

This sequence belongs to the AP endonuclease 2 family. Zn(2+) serves as cofactor.

The enzyme catalyses Endonucleolytic cleavage to 5'-phosphooligonucleotide end-products.. Functionally, endonuclease IV plays a role in DNA repair. It cleaves phosphodiester bonds at apurinic or apyrimidinic (AP) sites, generating a 3'-hydroxyl group and a 5'-terminal sugar phosphate. In Chlorobium limicola (strain DSM 245 / NBRC 103803 / 6330), this protein is Probable endonuclease 4.